The primary structure comprises 431 residues: DNA polymerase delta subunit 2 (431 aa).

This sequence belongs to the DNA polymerase delta/II small subunit family. In terms of assembly, component of both the DNA polymerase delta and DNA polymerase zeta complexes. The DNA polymerase delta complex consisting of three subunits: the catalytic subunit PolD1 and two accessory subunits PolD2/Pol31 and PolD3/Pol32. Within the delta complex, interacts with both PolD1 and PolD3, and is able to interact with PolD1 in the absence of PolD3. Component of the DNA polymerase zeta complex consisting of four subunits: the catalytic subunit PolZ1 and three accessory subunits PolZ2/Rev7, PolD2/Pol31 and PolD3/Pol32. As to expression, expressed in ovaries and embryos (at the protein level).

It localises to the nucleus. The protein localises to the nucleoplasm. Functionally, accessory component of both the DNA polymerase delta complex and possibly the DNA polymerase zeta complex. As a component of the delta complex, participates in high fidelity genome replication, including lagging strand synthesis, DNA recombination and repair. Appears to promote the function of the DNA pol-delta complex accessory subunit PolD3 in both embryonic and postembryonic somatic cells. In Drosophila melanogaster (Fruit fly), this protein is DNA polymerase delta subunit 2.